We begin with the raw amino-acid sequence, 280 residues long: uncharacterized protein (280 aa).

To E.coli YgfZ (UP14) and B.aphidicola (subsp. Acyrthosiphon pisum) BU435.

This is an uncharacterized protein from Haemophilus influenzae (strain ATCC 51907 / DSM 11121 / KW20 / Rd).